We begin with the raw amino-acid sequence, 63 residues long: MNFYKVFIFVALILAISLGQSEAGWLKKIGKKIERIGQHTRDATIQGLGIAQQAANVAATARG.

An N-terminal signal peptide occupies residues 1–23 (MNFYKVFIFVALILAISLGQSEA). Arginine 62 is modified (arginine amide).

This sequence belongs to the cecropin family.

The protein resides in the secreted. In terms of biological role, cecropins have lytic and antibacterial activity against several Gram-positive and Gram-negative bacteria. This chain is Cecropin-1/3 (Cec1), found in Drosophila virilis (Fruit fly).